The primary structure comprises 706 residues: Polyribonucleotide nucleotidyltransferase (706 aa).

Residues aspartate 486 and aspartate 492 each contribute to the Mg(2+) site. The KH domain occupies proline 552–isoleucine 611. Positions glycine 621 to lysine 689 constitute an S1 motif domain.

Belongs to the polyribonucleotide nucleotidyltransferase family. The cofactor is Mg(2+).

It is found in the cytoplasm. The enzyme catalyses RNA(n+1) + phosphate = RNA(n) + a ribonucleoside 5'-diphosphate. In terms of biological role, involved in mRNA degradation. Catalyzes the phosphorolysis of single-stranded polyribonucleotides processively in the 3'- to 5'-direction. This Thiobacillus denitrificans (strain ATCC 25259 / T1) protein is Polyribonucleotide nucleotidyltransferase.